Consider the following 382-residue polypeptide: Queuine tRNA-ribosyltransferase (382 aa).

Aspartate 93 acts as the Proton acceptor in catalysis. Residues 93–97 (DSGGF), aspartate 147, glutamine 191, and glycine 218 contribute to the substrate site. The segment at 249–255 (GVGKPED) is RNA binding. Residue aspartate 268 is the Nucleophile of the active site. An RNA binding; important for wobble base 34 recognition region spans residues 273–277 (TRNAR). Zn(2+)-binding residues include cysteine 306, cysteine 308, cysteine 311, and histidine 337.

Belongs to the queuine tRNA-ribosyltransferase family. Homodimer. Within each dimer, one monomer is responsible for RNA recognition and catalysis, while the other monomer binds to the replacement base PreQ1. Zn(2+) is required as a cofactor.

It carries out the reaction 7-aminomethyl-7-carbaguanine + guanosine(34) in tRNA = 7-aminomethyl-7-carbaguanosine(34) in tRNA + guanine. The protein operates within tRNA modification; tRNA-queuosine biosynthesis. Functionally, catalyzes the base-exchange of a guanine (G) residue with the queuine precursor 7-aminomethyl-7-deazaguanine (PreQ1) at position 34 (anticodon wobble position) in tRNAs with GU(N) anticodons (tRNA-Asp, -Asn, -His and -Tyr). Catalysis occurs through a double-displacement mechanism. The nucleophile active site attacks the C1' of nucleotide 34 to detach the guanine base from the RNA, forming a covalent enzyme-RNA intermediate. The proton acceptor active site deprotonates the incoming PreQ1, allowing a nucleophilic attack on the C1' of the ribose to form the product. After dissociation, two additional enzymatic reactions on the tRNA convert PreQ1 to queuine (Q), resulting in the hypermodified nucleoside queuosine (7-(((4,5-cis-dihydroxy-2-cyclopenten-1-yl)amino)methyl)-7-deazaguanosine). In Haemophilus influenzae (strain ATCC 51907 / DSM 11121 / KW20 / Rd), this protein is Queuine tRNA-ribosyltransferase.